Here is a 78-residue protein sequence, read N- to C-terminus: Acyl carrier protein (78 aa).

In terms of domain architecture, Carrier spans Ser-2–Ala-77. Ser-37 carries the post-translational modification O-(pantetheine 4'-phosphoryl)serine.

The protein belongs to the acyl carrier protein (ACP) family. Post-translationally, 4'-phosphopantetheine is transferred from CoA to a specific serine of apo-ACP by AcpS. This modification is essential for activity because fatty acids are bound in thioester linkage to the sulfhydryl of the prosthetic group.

The protein resides in the cytoplasm. The protein operates within lipid metabolism; fatty acid biosynthesis. Carrier of the growing fatty acid chain in fatty acid biosynthesis. Is probably involved in the biosynthesis of docosahexaenoic acid (DHA) which is produced by this bacterium as a fatty acyl component in its membrane lipid. The protein is Acyl carrier protein of Moritella marina (Vibrio marinus).